The primary structure comprises 327 residues: Zinc transport protein ZntB (327 aa).

Over 1–273 (MEAIKGSDVN…ARRTYTMSLM (273 aa)) the chain is Cytoplasmic. The helical transmembrane segment at 274-294 (AMVFLPSTFLTGLFGVNLGGI) threads the bilayer. Over 295–300 (PGGGWQ) the chain is Periplasmic. A helical membrane pass occupies residues 301–321 (FGFSIFCILLVVLIGGVALWL). Topologically, residues 322–327 (HRSKWL) are cytoplasmic.

Belongs to the CorA metal ion transporter (MIT) (TC 1.A.35) family.

Its subcellular location is the cell inner membrane. The catalysed reaction is Zn(2+)(out) + H(+)(out) = Zn(2+)(in) + H(+)(in). Functionally, zinc transporter. Acts as a Zn(2+):proton symporter, which likely mediates zinc ion uptake. This is Zinc transport protein ZntB from Escherichia coli O6:K15:H31 (strain 536 / UPEC).